Reading from the N-terminus, the 372-residue chain is NAD(P)H-quinone oxidoreductase subunit 1 (372 aa).

A run of 8 helical transmembrane segments spans residues 27-47 (MLWL…GVLV), 97-117 (ILFT…WLIV), 128-148 (VGVG…GLLM), 166-186 (AAQS…VVMM), 204-224 (VLSW…ICAL), 266-286 (VLSA…PIPV), 308-328 (TVGI…AILL), and 347-367 (FLLP…LAFP).

It belongs to the complex I subunit 1 family. NDH-1 is composed of at least 11 different subunits.

It is found in the cellular thylakoid membrane. It catalyses the reaction a plastoquinone + NADH + (n+1) H(+)(in) = a plastoquinol + NAD(+) + n H(+)(out). It carries out the reaction a plastoquinone + NADPH + (n+1) H(+)(in) = a plastoquinol + NADP(+) + n H(+)(out). In terms of biological role, NDH-1 shuttles electrons from an unknown electron donor, via FMN and iron-sulfur (Fe-S) centers, to quinones in the respiratory and/or the photosynthetic chain. The immediate electron acceptor for the enzyme in this species is believed to be plastoquinone. Couples the redox reaction to proton translocation, and thus conserves the redox energy in a proton gradient. The protein is NAD(P)H-quinone oxidoreductase subunit 1 of Synechococcus sp. (strain CC9311).